Reading from the N-terminus, the 103-residue chain is Matrix Gla protein (103 aa).

A signal peptide spans 1-19 (MKSLVLLAILAALAVVTLC). Glu-21 carries the 4-carboxyglutamate modification. Phosphoserine occurs at positions 22, 25, and 28. In terms of domain architecture, Gla spans 51–97 (RAKVQERIRERSKPVHELNREACDDYRLCERYAMVYGYNAAYNRYFR). A 4-carboxyglutamate mark is found at Glu-56, Glu-60, Glu-67, and Glu-71. Residues Cys-73 and Cys-79 are joined by a disulfide bond. A propeptide spans 97–103 (RERRGAK) (removed in mature form; probably by carboxypeptidase N).

This sequence belongs to the osteocalcin/matrix Gla protein family. In terms of processing, requires vitamin K-dependent gamma-carboxylation for its function.

It localises to the secreted. Functionally, associates with the organic matrix of bone and cartilage. Thought to act as an inhibitor of bone formation. The sequence is that of Matrix Gla protein (MGP) from Pongo abelii (Sumatran orangutan).